We begin with the raw amino-acid sequence, 321 residues long: Probable cell division protein WhiA (321 aa).

Positions 275 to 308 form a DNA-binding region, H-T-H motif; that stretch reads SLDELGRLADPPMTKDAVAGRIRRLLAMADKRAA.

The protein belongs to the WhiA family.

Functionally, involved in cell division and chromosome segregation. This is Probable cell division protein WhiA from Micrococcus luteus (strain ATCC 4698 / DSM 20030 / JCM 1464 / CCM 169 / CCUG 5858 / IAM 1056 / NBRC 3333 / NCIMB 9278 / NCTC 2665 / VKM Ac-2230) (Micrococcus lysodeikticus).